We begin with the raw amino-acid sequence, 436 residues long: UDP-N-acetylglucosamine 1-carboxyvinyltransferase 1 (436 aa).

Residue 22-23 (KN) coordinates phosphoenolpyruvate. Position 93 (Arg93) interacts with UDP-N-acetyl-alpha-D-glucosamine. Cys117 (proton donor) is an active-site residue. Cys117 is modified (2-(S-cysteinyl)pyruvic acid O-phosphothioketal). UDP-N-acetyl-alpha-D-glucosamine-binding positions include 122 to 126 (RPIDQ), Asp306, and Val328.

This sequence belongs to the EPSP synthase family. MurA subfamily.

It localises to the cytoplasm. It carries out the reaction phosphoenolpyruvate + UDP-N-acetyl-alpha-D-glucosamine = UDP-N-acetyl-3-O-(1-carboxyvinyl)-alpha-D-glucosamine + phosphate. It participates in cell wall biogenesis; peptidoglycan biosynthesis. Its function is as follows. Cell wall formation. Adds enolpyruvyl to UDP-N-acetylglucosamine. Essential for cell growth. This is UDP-N-acetylglucosamine 1-carboxyvinyltransferase 1 from Bacillus subtilis (strain 168).